The chain runs to 332 residues: 4-hydroxy-3-methylbut-2-enyl diphosphate reductase (332 aa).

Residue Cys-34 participates in [4Fe-4S] cluster binding. Residues His-63 and His-96 each coordinate (2E)-4-hydroxy-3-methylbut-2-enyl diphosphate. 2 residues coordinate dimethylallyl diphosphate: His-63 and His-96. 2 residues coordinate isopentenyl diphosphate: His-63 and His-96. Residue Cys-118 participates in [4Fe-4S] cluster binding. His-146 serves as a coordination point for (2E)-4-hydroxy-3-methylbut-2-enyl diphosphate. Residue His-146 coordinates dimethylallyl diphosphate. His-146 is a binding site for isopentenyl diphosphate. Glu-148 (proton donor) is an active-site residue. (2E)-4-hydroxy-3-methylbut-2-enyl diphosphate is bound at residue Thr-186. Cys-216 is a binding site for [4Fe-4S] cluster. Residues Ser-244, Ser-245, Asn-246, and Ser-289 each coordinate (2E)-4-hydroxy-3-methylbut-2-enyl diphosphate. Dimethylallyl diphosphate is bound by residues Ser-244, Ser-245, Asn-246, and Ser-289. Residues Ser-244, Ser-245, Asn-246, and Ser-289 each contribute to the isopentenyl diphosphate site.

The protein belongs to the IspH family. The cofactor is [4Fe-4S] cluster.

It catalyses the reaction isopentenyl diphosphate + 2 oxidized [2Fe-2S]-[ferredoxin] + H2O = (2E)-4-hydroxy-3-methylbut-2-enyl diphosphate + 2 reduced [2Fe-2S]-[ferredoxin] + 2 H(+). It carries out the reaction dimethylallyl diphosphate + 2 oxidized [2Fe-2S]-[ferredoxin] + H2O = (2E)-4-hydroxy-3-methylbut-2-enyl diphosphate + 2 reduced [2Fe-2S]-[ferredoxin] + 2 H(+). It functions in the pathway isoprenoid biosynthesis; dimethylallyl diphosphate biosynthesis; dimethylallyl diphosphate from (2E)-4-hydroxy-3-methylbutenyl diphosphate: step 1/1. The protein operates within isoprenoid biosynthesis; isopentenyl diphosphate biosynthesis via DXP pathway; isopentenyl diphosphate from 1-deoxy-D-xylulose 5-phosphate: step 6/6. Functionally, catalyzes the conversion of 1-hydroxy-2-methyl-2-(E)-butenyl 4-diphosphate (HMBPP) into a mixture of isopentenyl diphosphate (IPP) and dimethylallyl diphosphate (DMAPP). Acts in the terminal step of the DOXP/MEP pathway for isoprenoid precursor biosynthesis. In Mycobacterium leprae (strain TN), this protein is 4-hydroxy-3-methylbut-2-enyl diphosphate reductase.